The chain runs to 282 residues: Dihydropteroate synthase (282 aa).

In terms of domain architecture, Pterin-binding spans proline 15–arginine 267. Asparagine 22 lines the Mg(2+) pocket. Residues threonine 62, aspartate 96, asparagine 115, aspartate 185, lysine 221, and arginine 255–histidine 257 each bind (7,8-dihydropterin-6-yl)methyl diphosphate.

Belongs to the DHPS family. Homodimer. Mg(2+) is required as a cofactor.

It carries out the reaction (7,8-dihydropterin-6-yl)methyl diphosphate + 4-aminobenzoate = 7,8-dihydropteroate + diphosphate. Its pathway is cofactor biosynthesis; tetrahydrofolate biosynthesis; 7,8-dihydrofolate from 2-amino-4-hydroxy-6-hydroxymethyl-7,8-dihydropteridine diphosphate and 4-aminobenzoate: step 1/2. Its function is as follows. Catalyzes the condensation of para-aminobenzoate (pABA) with 6-hydroxymethyl-7,8-dihydropterin diphosphate (DHPt-PP) to form 7,8-dihydropteroate (H2Pte), the immediate precursor of folate derivatives. The protein is Dihydropteroate synthase (folP) of Shigella flexneri.